A 221-amino-acid polypeptide reads, in one-letter code: MTRLVTATEMQQIDNYTIETIGMPQDVLIERAAMAVLDVIGAGRFDLSHVLVLAGLGNNGADGVAIARLLYAQGVNVSLQFVGNVSRAKDSVKRQLAIIEKHGLVRSEKSDFNEATLIIDAIFGVGLNNVLPEGLQKMIKAANHIDKPVIAVDVPTGIDATTGEVRGAALKAHTTVTFGFTKVGLTQQNGCYLSGNVILKDVGMLIPDDFEFSLQETLPVA.

Residues 10–210 (MQQIDNYTIE…DVGMLIPDDF (201 aa)) enclose the YjeF N-terminal domain. A (6S)-NADPHX-binding site is contributed by 58–62 (NNGAD). Positions 59 and 120 each coordinate K(+). (6S)-NADPHX contacts are provided by residues 124–130 (GVGLNNV) and Asp153. Thr156 lines the K(+) pocket.

This sequence belongs to the NnrE/AIBP family. K(+) serves as cofactor.

It carries out the reaction (6R)-NADHX = (6S)-NADHX. The catalysed reaction is (6R)-NADPHX = (6S)-NADPHX. Catalyzes the epimerization of the S- and R-forms of NAD(P)HX, a damaged form of NAD(P)H that is a result of enzymatic or heat-dependent hydration. This is a prerequisite for the S-specific NAD(P)H-hydrate dehydratase to allow the repair of both epimers of NAD(P)HX. The chain is NAD(P)H-hydrate epimerase from Leuconostoc mesenteroides subsp. mesenteroides (strain ATCC 8293 / DSM 20343 / BCRC 11652 / CCM 1803 / JCM 6124 / NCDO 523 / NBRC 100496 / NCIMB 8023 / NCTC 12954 / NRRL B-1118 / 37Y).